Consider the following 366-residue polypeptide: Cytochrome c mitochondrial import factor CYC2 (366 aa).

The N-terminal 50 residues, 1 to 50 (MLWKNYVLSSSRITRRLHKSPRKSSFSKNFFITGCLLTVGAVSSYLTYRY), are a transit peptide targeting the mitochondrion. The FAD-binding FR-type domain occupies 63 to 184 (SYFVKYKISH…RGPFIDYEFP (122 aa)).

FAD is required as a cofactor.

The protein resides in the mitochondrion inner membrane. In terms of biological role, redox component that participates in c-type cytochrome biogenesis in the mitochondrial intermembrane space. May play a role in the reduction of heme prior to its ligation to apocytochrome c by cytochrome c heme lyase. Has oxidoreductase activity in vitro. This chain is Cytochrome c mitochondrial import factor CYC2 (CYC2), found in Saccharomyces cerevisiae (strain ATCC 204508 / S288c) (Baker's yeast).